Reading from the N-terminus, the 44-residue chain is RACIELGEDCDGYKDDCQCCRDNAFCSCYEFFGEKNGCGCAVGH.

4 disulfide bridges follow: Cys3–Cys20, Cys10–Cys26, Cys19–Cys40, and Cys28–Cys38.

Expressed by the venom gland.

The protein localises to the secreted. Functionally, omega-agatoxins are antagonists of voltage-sensitive calcium channels (Cav). Toxic to mice by intracerebroventricular injection. This chain is U17-ctenitoxin-Co1a, found in Ctenus ornatus (Brazilian spider).